The following is a 305-amino-acid chain: Glycerol-3-phosphate dehydrogenase [NAD(P)+] (305 aa).

Residues Phe-10, Arg-29, and Lys-87 each coordinate NADPH. 3 residues coordinate sn-glycerol 3-phosphate: Lys-87, Gly-115, and Ser-117. Ala-119 provides a ligand contact to NADPH. Sn-glycerol 3-phosphate contacts are provided by Lys-170, Asp-223, Ser-233, Arg-234, and Asn-235. Lys-170 serves as the catalytic Proton acceptor. Arg-234 contributes to the NADPH binding site. Glu-255 contributes to the NADPH binding site.

This sequence belongs to the NAD-dependent glycerol-3-phosphate dehydrogenase family.

Its subcellular location is the cytoplasm. It carries out the reaction sn-glycerol 3-phosphate + NAD(+) = dihydroxyacetone phosphate + NADH + H(+). The catalysed reaction is sn-glycerol 3-phosphate + NADP(+) = dihydroxyacetone phosphate + NADPH + H(+). It functions in the pathway membrane lipid metabolism; glycerophospholipid metabolism. Catalyzes the reduction of the glycolytic intermediate dihydroxyacetone phosphate (DHAP) to sn-glycerol 3-phosphate (G3P), the key precursor for phospholipid synthesis. The chain is Glycerol-3-phosphate dehydrogenase [NAD(P)+] from Cereibacter sphaeroides (strain ATCC 17023 / DSM 158 / JCM 6121 / CCUG 31486 / LMG 2827 / NBRC 12203 / NCIMB 8253 / ATH 2.4.1.) (Rhodobacter sphaeroides).